The chain runs to 647 residues: 2',3'-cyclic-nucleotide 2'-phosphodiesterase/3'-nucleotidase (647 aa).

A signal peptide spans 1 to 19 (MIKFSATLLATLIAASVNA). Aspartate 31, histidine 33, aspartate 76, asparagine 116, histidine 225, histidine 257, and histidine 259 together coordinate a divalent metal cation. Residues tyrosine 440 and 544–550 (YRAYGGK) each bind substrate.

It belongs to the 5'-nucleotidase family. The cofactor is a divalent metal cation.

The protein resides in the periplasm. It catalyses the reaction a nucleoside 2',3'-cyclic phosphate + H2O = a nucleoside 3'-phosphate + H(+). The catalysed reaction is a ribonucleoside 3'-phosphate + H2O = a ribonucleoside + phosphate. Its function is as follows. This bifunctional enzyme catalyzes two consecutive reactions during ribonucleic acid degradation. Converts a 2',3'-cyclic nucleotide to a 3'-nucleotide and then the 3'-nucleotide to the corresponding nucleoside and phosphate. This Salmonella typhimurium (strain LT2 / SGSC1412 / ATCC 700720) protein is 2',3'-cyclic-nucleotide 2'-phosphodiesterase/3'-nucleotidase (cpdB).